The sequence spans 426 residues: Histidine--tRNA ligase (426 aa).

It belongs to the class-II aminoacyl-tRNA synthetase family. As to quaternary structure, homodimer.

The protein localises to the cytoplasm. It catalyses the reaction tRNA(His) + L-histidine + ATP = L-histidyl-tRNA(His) + AMP + diphosphate + H(+). This chain is Histidine--tRNA ligase, found in Chlorobium phaeovibrioides (strain DSM 265 / 1930) (Prosthecochloris vibrioformis (strain DSM 265)).